We begin with the raw amino-acid sequence, 464 residues long: Glutamate--tRNA ligase 2 (464 aa).

The 'HIGH' region motif lies at 11–21 (PSPTGFLHIGS). Residues 240 to 244 (KLSKR) carry the 'KMSKS' region motif. An ATP-binding site is contributed by Lys243.

Belongs to the class-I aminoacyl-tRNA synthetase family. Glutamate--tRNA ligase type 1 subfamily. As to quaternary structure, monomer.

It localises to the cytoplasm. It carries out the reaction tRNA(Glu) + L-glutamate + ATP = L-glutamyl-tRNA(Glu) + AMP + diphosphate. Catalyzes the attachment of glutamate to tRNA(Glu) in a two-step reaction: glutamate is first activated by ATP to form Glu-AMP and then transferred to the acceptor end of tRNA(Glu). This is Glutamate--tRNA ligase 2 from Rickettsia bellii (strain OSU 85-389).